The chain runs to 152 residues: 3-hydroxyacyl-[acyl-carrier-protein] dehydratase FabZ (152 aa).

Residue histidine 54 is part of the active site.

This sequence belongs to the thioester dehydratase family. FabZ subfamily.

The protein localises to the cytoplasm. The enzyme catalyses a (3R)-hydroxyacyl-[ACP] = a (2E)-enoyl-[ACP] + H2O. Involved in unsaturated fatty acids biosynthesis. Catalyzes the dehydration of short chain beta-hydroxyacyl-ACPs and long chain saturated and unsaturated beta-hydroxyacyl-ACPs. The polypeptide is 3-hydroxyacyl-[acyl-carrier-protein] dehydratase FabZ (Buchnera aphidicola subsp. Schizaphis graminum (strain Sg)).